The sequence spans 339 residues: Putative NADP-dependent oxidoreductase YfmJ (339 aa).

Residues 156–159 (GAVG), Lys-182, Tyr-198, Asn-222, 244–250 (CGAISSY), 277–279 (FIV), and Asn-327 each bind NADP(+).

Belongs to the NADP-dependent oxidoreductase L4BD family.

Functionally, putative quinone oxidoreductase that may contribute to the degradation of aromatic compounds. The polypeptide is Putative NADP-dependent oxidoreductase YfmJ (yfmJ) (Bacillus subtilis (strain 168)).